The chain runs to 319 residues: Ribosomal large subunit pseudouridine synthase C (319 aa).

Residues 20–83 (QRIDNFLRTQ…AEREEEAVSP (64 aa)) form the S4 RNA-binding domain. The active site involves Asp-144.

Belongs to the pseudouridine synthase RluA family.

It carries out the reaction uridine(955/2504/2580) in 23S rRNA = pseudouridine(955/2504/2580) in 23S rRNA. In terms of biological role, responsible for synthesis of pseudouridine from uracil at positions 955, 2504 and 2580 in 23S ribosomal RNA. This chain is Ribosomal large subunit pseudouridine synthase C, found in Escherichia coli (strain K12).